A 269-amino-acid chain; its full sequence is Tryptophan synthase alpha chain (269 aa).

Active-site proton acceptor residues include glutamate 56 and aspartate 67.

The protein belongs to the TrpA family. As to quaternary structure, tetramer of two alpha and two beta chains.

It carries out the reaction (1S,2R)-1-C-(indol-3-yl)glycerol 3-phosphate + L-serine = D-glyceraldehyde 3-phosphate + L-tryptophan + H2O. The protein operates within amino-acid biosynthesis; L-tryptophan biosynthesis; L-tryptophan from chorismate: step 5/5. Its function is as follows. The alpha subunit is responsible for the aldol cleavage of indoleglycerol phosphate to indole and glyceraldehyde 3-phosphate. This chain is Tryptophan synthase alpha chain, found in Mycobacterium marinum (strain ATCC BAA-535 / M).